A 304-amino-acid polypeptide reads, in one-letter code: Ornithine carbamoyltransferase (304 aa).

Carbamoyl phosphate-binding positions include 53–56 (STRT), Gln80, Arg104, and 131–134 (HPCQ). L-ornithine is bound by residues Asn162, Asp219, and 223 to 224 (SM). Carbamoyl phosphate contacts are provided by residues 259–260 (CL) and Arg287.

The protein belongs to the aspartate/ornithine carbamoyltransferase superfamily. OTCase family.

The protein resides in the cytoplasm. It catalyses the reaction carbamoyl phosphate + L-ornithine = L-citrulline + phosphate + H(+). It functions in the pathway amino-acid biosynthesis; L-arginine biosynthesis; L-arginine from L-ornithine and carbamoyl phosphate: step 1/3. Functionally, reversibly catalyzes the transfer of the carbamoyl group from carbamoyl phosphate (CP) to the N(epsilon) atom of ornithine (ORN) to produce L-citrulline. The chain is Ornithine carbamoyltransferase from Nitrosococcus oceani (strain ATCC 19707 / BCRC 17464 / JCM 30415 / NCIMB 11848 / C-107).